The following is a 711-amino-acid chain: DNA topoisomerase 3 (711 aa).

The Toprim domain maps to 2 to 135 (KSLILAEKPS…LRRLWISSVT (134 aa)). Mg(2+) is bound by residues Glu8 and Asp104. Positions 152–580 (YNDLYYAALA…EMKDFTKDVV (429 aa)) constitute a Topo IA-type catalytic domain. The interval 186 to 191 (SLGRVQ) is interaction with DNA. The O-(5'-phospho-DNA)-tyrosine intermediate role is filled by Tyr305. The interval 691 to 711 (MNKNEGLDNNPFKDALKNLNL) is disordered.

Belongs to the type IA topoisomerase family. Mg(2+) is required as a cofactor.

It catalyses the reaction ATP-independent breakage of single-stranded DNA, followed by passage and rejoining.. Its function is as follows. Releases the supercoiling and torsional tension of DNA, which is introduced during the DNA replication and transcription, by transiently cleaving and rejoining one strand of the DNA duplex. Introduces a single-strand break via transesterification at a target site in duplex DNA. The scissile phosphodiester is attacked by the catalytic tyrosine of the enzyme, resulting in the formation of a DNA-(5'-phosphotyrosyl)-enzyme intermediate and the expulsion of a 3'-OH DNA strand. The free DNA strand then undergoes passage around the unbroken strand, thus removing DNA supercoils. Finally, in the religation step, the DNA 3'-OH attacks the covalent intermediate to expel the active-site tyrosine and restore the DNA phosphodiester backbone. The sequence is that of DNA topoisomerase 3 from Staphylococcus aureus (strain MRSA252).